The sequence spans 523 residues: Rho guanine nucleotide exchange factor 8 (523 aa).

Over residues 44-57 the composition is skewed to polar residues; it reads VESNTPESQNSDSF. 2 disordered regions span residues 44–83 and 442–523; these read VESN…ERQQ and ETSD…KDRH. The PRONE domain maps to 76–440; that stretch reads GKRSERQQAD…TLALKQTLLA (365 aa). Basic and acidic residues predominate over residues 465–475; that stretch reads EAEKHDPHSKT.

As to quaternary structure, homodimer. The homodimer interacts with ARAC5/ROP4. Interacts with ARAC11/ROP1 and ARAC10/ROP11. Interacts with PRK6. Expressed in pollen grains and pollen tubes.

Its subcellular location is the cell membrane. Functionally, guanine-nucleotide exchange factor (GEF) that acts as an activator of Rop (Rho of plants) GTPases by promoting the exchange of GDP for GTP. Active as homodimer. This chain is Rho guanine nucleotide exchange factor 8, found in Arabidopsis thaliana (Mouse-ear cress).